The sequence spans 400 residues: MKRNIQIEALNQIPLEKQRIELVERKCLGHPDSIADGIAESISQALCREYLKEFGAVLHHNTDQGEVVAGESCPKFGGGKMIRPIYVLIDGRATKQFNGVTIPTDTVAVEAAHEYLHKILPELNLQRDVMIDSRLGTGSTDLRDVFKPRQGKVPRSNDTSFGVGHAPFSDVETIIRNTSEYIDTKLRKKYPAIGQDIKIMGLRDGNTITLTVACAIVDRYCADIREYQEYMGLLTEEIGKVAKKSTKRKVVVNLNTADDIKSKSVFLTVTGTSAEMGDDGSVGRGNRCNGLITPNRPMSMEATSGKNPINHIGKIYNLLSTQIAQESIKKVDGIEEMYVRLLSQIGKPIDQPLVASVQVLPRKGVTLQEINGEIQAIVDDNLANVTSITEKVIRGELKTF.

An ATP-binding site is contributed by 136–141; it reads GTGSTD.

This sequence belongs to the AdoMet synthase 2 family. The cofactor is Mg(2+).

The enzyme catalyses L-methionine + ATP + H2O = S-adenosyl-L-methionine + phosphate + diphosphate. It functions in the pathway amino-acid biosynthesis; S-adenosyl-L-methionine biosynthesis; S-adenosyl-L-methionine from L-methionine: step 1/1. In terms of biological role, catalyzes the formation of S-adenosylmethionine from methionine and ATP. This chain is S-adenosylmethionine synthase, found in Methanoregula boonei (strain DSM 21154 / JCM 14090 / 6A8).